The primary structure comprises 701 residues: Ubiquitin thioesterase zranb1-B (701 aa).

RanBP2-type zinc fingers lie at residues 3 to 33, 79 to 108, and 143 to 173; these read EDGIKWACEYCTFENWPSAIKCTMCRAPRPS, TSSKWSCQICTYLNWPRAIRCTQCLSQRRT, and IKGQHWTCSACTYENCAKAKKCVVCDHPTPN. Residues C10, C13, C24, C27, C85, C88, C99, and C102 each contribute to the Zn(2+) site. Polar residues predominate over residues 108–121; sequence TRSPTESPQSSGSG. The disordered stretch occupies residues 108-129; that stretch reads TRSPTESPQSSGSGLRSIPGPI. Positions 150, 153, 164, and 167 each coordinate Zn(2+). The interval 197–220 is disordered; sequence RWRGGCSSSNSQRRSPPTSKRDSD. A compositionally biased stretch (polar residues) spans 202-214; that stretch reads CSSSNSQRRSPPT. ANK repeat units lie at residues 253-283 and 306-333; these read RKTDWLFLNACVGVVEGDLSAVEAYKTSGGD and YTLVHLSIRFQRQDMLAILLTEVAQHAA. In terms of domain architecture, OTU spans 425 to 585; the sequence is LYALWNRTAG…RGHFSALVAM (161 aa). C436 (nucleophile) is an active-site residue. Catalysis depends on H578, which acts as the Proton acceptor.

Belongs to the peptidase C64 family.

It is found in the cytoplasm. It localises to the nucleus. The enzyme catalyses Thiol-dependent hydrolysis of ester, thioester, amide, peptide and isopeptide bonds formed by the C-terminal Gly of ubiquitin (a 76-residue protein attached to proteins as an intracellular targeting signal).. Its function is as follows. Ubiquitin thioesterase, which specifically hydrolyzes 'Lys-29'-linked and 'Lys-33'-linked diubiquitin. Also cleaves 'Lys-63'-linked chains, but with 40-fold less efficiency compared to 'Lys-29'-linked ones. Positive regulator of the Wnt signaling pathway that deubiquitinates apc protein, a negative regulator of Wnt-mediated transcription. Acts as a regulator of autophagy by mediating deubiquitination of pik3c3/vps34, thereby promoting autophagosome maturation. Plays a role in the regulation of cell morphology and cytoskeletal organization. Required in the stress fiber dynamics and cell migration. In Xenopus laevis (African clawed frog), this protein is Ubiquitin thioesterase zranb1-B (zranb1-b).